Here is a 447-residue protein sequence, read N- to C-terminus: Phosphoglucosamine mutase (447 aa).

Serine 101 (phosphoserine intermediate) is an active-site residue. The Mg(2+) site is built by serine 101, aspartate 242, aspartate 244, and aspartate 246. The residue at position 101 (serine 101) is a Phosphoserine.

Belongs to the phosphohexose mutase family. It depends on Mg(2+) as a cofactor. In terms of processing, activated by phosphorylation.

The catalysed reaction is alpha-D-glucosamine 1-phosphate = D-glucosamine 6-phosphate. In terms of biological role, catalyzes the conversion of glucosamine-6-phosphate to glucosamine-1-phosphate. This Bradyrhizobium diazoefficiens (strain JCM 10833 / BCRC 13528 / IAM 13628 / NBRC 14792 / USDA 110) protein is Phosphoglucosamine mutase.